The following is a 750-amino-acid chain: MRRCGRHSGPPSLLLLLLLLPPLLLSVPGAYAARLSVLYSSSDPLTLLDADTVRPAVLGSSSAWAVEFFASWCGHCIAFAPTWKELANDVKDWRPALNLAVLDCADETNSAVCREFNIAGFPTVRFFKAFSKNGTGTALPAAGANVQTLRMRLIDALESHRDTWPPACPPLEPAKLKDINEFFTRSKAEYLALIFEREDSYLGREVTLDLSQFHAVAVRRVLNSESDVVSKFAVTDFPSCYLLLRNGSVSRVPVLVESRPFYTSYLRGLPGLTREAPPTTAAPVTPDKIAPTVWKFADRSKIYMADLESALHYILRVEVGKFSVLEGQRLVALKKFVAVLAKYFPGQPLVQNFLHSINDWLQKQQKKKIPYSYFKAALDSRKENAVLAEKVNWIGCQGSEPHFRGFPCSLWVLFHFLTVQAHRYSEAHPQEPADGQEVLQAMRSYVQSFFGCRDCANHFEQMAAASMHQVKSPSNAVLWLWTSHNRVNARLSGALSEDPQFPKVQWPPRELCSACHNEVNGQVPLWDLGATLNFLKAHFSPANIVRDPPAPGPASRRGTQDPEASPNLVMDTLKLETGNSVLGHEQAASAASPGATALDVPAGKPEASGPQELNAGLSMGGASPGQGPPEHTEELLRDVQENAQGQQHLSKRDTEALLLPEVNHLQGPLAPRRGGHSPKQLASILEGEPEALAIQGRRQWLQVLGGGVSFLDISLCVGLYSVSFMGLLAMYTYFRARMRTPKGHVSYPTA.

The first 32 residues, 1–32 (MRRCGRHSGPPSLLLLLLLLPPLLLSVPGAYA), serve as a signal peptide directing secretion. Positions 33–159 (ARLSVLYSSS…RMRLIDALES (127 aa)) constitute a Thioredoxin domain. Residues cysteine 73 and cysteine 76 each act as nucleophile in the active site. Intrachain disulfides connect cysteine 73/cysteine 76 and cysteine 104/cysteine 113. 2 N-linked (GlcNAc...) asparagine glycosylation sites follow: asparagine 133 and asparagine 246. Cysteine 396 and cysteine 408 form a disulfide bridge. An ERV/ALR sulfhydryl oxidase domain is found at 399–506 (SEPHFRGFPC…EDPQFPKVQW (108 aa)). FAD-binding positions include arginine 404, tryptophan 411, histidine 415, aspartate 454, histidine 458, 481–488 (WTSHNRVN), lysine 503, and tryptophan 506. The cysteines at positions 452 and 455 are disulfide-linked. A disulfide bridge connects residues cysteine 512 and cysteine 515. Disordered regions lie at residues 545–567 (VRDP…ASPN) and 585–632 (EQAA…PEHT). Residues 587 to 597 (AASAASPGATA) show a composition bias toward low complexity. The helical transmembrane segment at 710 to 730 (FLDISLCVGLYSVSFMGLLAM) threads the bilayer.

Belongs to the quiescin-sulfhydryl oxidase (QSOX) family. Monomer. The cofactor is FAD. In terms of processing, N-glycosylated. O-glycosylated on Thr and Ser residues. Isoform 3: Detected in seminal vesicle fluid (at protein level). Isoform 1: Detected in brain, hypophysis, heart, testis and the seminal vesicle. Isoform 3: Highly expressed in the seminal vesicles followed by testis, heart, brain, thymus, hypophysis and lung. Also expressed in prostate, kidney, spleen, liver.

It localises to the golgi apparatus membrane. Its subcellular location is the secreted. The catalysed reaction is 2 R'C(R)SH + O2 = R'C(R)S-S(R)CR' + H2O2. Catalyzes the oxidation of sulfhydryl groups in peptide and protein thiols to disulfides with the reduction of oxygen to hydrogen peroxide. Plays a role in disulfide bond formation in a variety of extracellular proteins. In fibroblasts, required for normal incorporation of laminin into the extracellular matrix, and thereby for normal cell-cell adhesion and cell migration. The sequence is that of Sulfhydryl oxidase 1 (Qsox1) from Rattus norvegicus (Rat).